The sequence spans 112 residues: Gastrula zinc finger protein XlCGF16.1 (112 aa).

4 C2H2-type zinc fingers span residues Tyr6–His28, Phe34–His56, Phe62–His84, and Phe90–His112.

It belongs to the krueppel C2H2-type zinc-finger protein family.

Its subcellular location is the nucleus. In terms of biological role, may be involved in transcriptional regulation. This chain is Gastrula zinc finger protein XlCGF16.1, found in Xenopus laevis (African clawed frog).